Consider the following 373-residue polypeptide: Flagellar P-ring protein (373 aa).

An N-terminal signal peptide occupies residues 1–30 (MTNRWSFDVKKNLVTLILTWLCLSISTAQA).

It belongs to the FlgI family. As to quaternary structure, the basal body constitutes a major portion of the flagellar organelle and consists of four rings (L,P,S, and M) mounted on a central rod.

Its subcellular location is the periplasm. It is found in the bacterial flagellum basal body. Functionally, assembles around the rod to form the L-ring and probably protects the motor/basal body from shearing forces during rotation. The chain is Flagellar P-ring protein from Aliivibrio salmonicida (strain LFI1238) (Vibrio salmonicida (strain LFI1238)).